Reading from the N-terminus, the 242-residue chain is Anamorsin homolog (242 aa).

The N-terminal SAM-like domain stretch occupies residues 1–140 (MMNFADTLVI…NVTAENPDFL (140 aa)). The linker stretch occupies residues 141–162 (SNEDDDEGNSSDGEAYQNAEDN). Residues C205, C208, C216, and C219 each contribute to the [4Fe-4S] cluster site. Short sequence motifs (cx2C motif) lie at residues 205–208 (CGNC) and 216–219 (CASC). Residues 205–219 (CGNCYLGDAFRCASC) form a fe-S binding site B region.

The protein belongs to the anamorsin family. As to quaternary structure, monomer. [4Fe-4S] cluster is required as a cofactor.

Its subcellular location is the cytoplasm. The protein localises to the mitochondrion intermembrane space. In terms of biological role, component of the cytosolic iron-sulfur (Fe-S) protein assembly (CIA) machinery. Required for the maturation of extramitochondrial Fe-S proteins. Part of an electron transfer chain functioning in an early step of cytosolic Fe-S biogenesis, facilitating the de novo assembly of a [4Fe-4S] cluster on the cytosolic Fe-S scaffold complex. Electrons are transferred from NADPH via a FAD- and FMN-containing diflavin oxidoreductase. Together with the diflavin oxidoreductase, also required for the assembly of the diferric tyrosyl radical cofactor of ribonucleotide reductase (RNR), probably by providing electrons for reduction during radical cofactor maturation in the catalytic small subunit. This chain is Anamorsin homolog, found in Plasmodium knowlesi (strain H).